Reading from the N-terminus, the 120-residue chain is NAD(P)H-quinone oxidoreductase subunit 3, chloroplastic (120 aa).

Transmembrane regions (helical) follow at residues 9–29 (IFWA…FISG), 64–84 (MFAL…PWAM), and 88–108 (VLGV…IVGL).

It belongs to the complex I subunit 3 family. In terms of assembly, NDH is composed of at least 16 different subunits, 5 of which are encoded in the nucleus.

The protein resides in the plastid. The protein localises to the chloroplast thylakoid membrane. The catalysed reaction is a plastoquinone + NADH + (n+1) H(+)(in) = a plastoquinol + NAD(+) + n H(+)(out). It carries out the reaction a plastoquinone + NADPH + (n+1) H(+)(in) = a plastoquinol + NADP(+) + n H(+)(out). NDH shuttles electrons from NAD(P)H:plastoquinone, via FMN and iron-sulfur (Fe-S) centers, to quinones in the photosynthetic chain and possibly in a chloroplast respiratory chain. The immediate electron acceptor for the enzyme in this species is believed to be plastoquinone. Couples the redox reaction to proton translocation, and thus conserves the redox energy in a proton gradient. This is NAD(P)H-quinone oxidoreductase subunit 3, chloroplastic from Lactuca sativa (Garden lettuce).